Here is a 394-residue protein sequence, read N- to C-terminus: Elongation factor Tu (394 aa).

Residues 10–204 enclose the tr-type G domain; the sequence is KTHLNVGTIG…TLDTYIEDPV (195 aa). A G1 region spans residues 19–26; it reads GHVDHGKT. 19–26 lines the GTP pocket; sequence GHVDHGKT. Threonine 26 contacts Mg(2+). The tract at residues 60-64 is G2; it reads GITIK. Residues 81–84 form a G3 region; that stretch reads DCPG. GTP is bound by residues 81–85 and 136–139; these read DCPGH and NKCD. Residues 136–139 form a G4 region; sequence NKCD. The segment at 174–176 is G5; sequence SAL.

This sequence belongs to the TRAFAC class translation factor GTPase superfamily. Classic translation factor GTPase family. EF-Tu/EF-1A subfamily. In terms of assembly, monomer.

It is found in the cytoplasm. The enzyme catalyses GTP + H2O = GDP + phosphate + H(+). GTP hydrolase that promotes the GTP-dependent binding of aminoacyl-tRNA to the A-site of ribosomes during protein biosynthesis. In Aster yellows witches'-broom phytoplasma (strain AYWB), this protein is Elongation factor Tu.